A 418-amino-acid chain; its full sequence is Delta(14)-sterol reductase TM7SF2 (418 aa).

6 helical membrane passes run 13 to 35 (FGGP…HLLL), 62 to 81 (ALLL…LLPA), 102 to 124 (GFQA…LPLG), 129 to 148 (MLLP…SLFL), 255 to 277 (FGFM…QAQF), and 287 to 304 (LPMA…YYIF). NADP(+) is bound by residues Lys311, Arg315, Leu338, Trp343, and 350–351 (NY). The chain crosses the membrane as a helical span at residues 355–377 (LIMALAWSLPCGVSHLLPYFYLL). NADP(+) contacts are provided by residues Asp390, 394–398 (CLQKY), and Tyr405.

Belongs to the ERG4/ERG24 family. As to expression, expressed in adult heart, brain, pancreas, lung, liver, skeletal muscle, kidney, ovary, prostate, testis and adrenal gland, but not detected in placenta, spleen, thymus, small intestine, colon (mucosal lining), or peripheral blood leukocytes.

The protein localises to the microsome membrane. Its subcellular location is the endoplasmic reticulum membrane. It catalyses the reaction 4,4-dimethyl-5alpha-cholesta-8,24-dien-3beta-ol + NADP(+) = 4,4-dimethyl-5alpha-cholesta-8,14,24-trien-3beta-ol + NADPH + H(+). The catalysed reaction is 5alpha-cholest-8,14-dien-3beta-ol + NADPH + H(+) = 5alpha-cholest-8-en-3beta-ol + NADP(+). The enzyme catalyses 4,4-dimethyl-8,14-cholestadien-3beta-ol + NADPH + H(+) = 4,4-dimethyl-5alpha-cholest-8-en-3beta-ol + NADP(+). The protein operates within steroid biosynthesis; cholesterol biosynthesis. In terms of biological role, catalyzes the reduction of the C14-unsaturated bond of lanosterol, as part of the metabolic pathway leading to cholesterol biosynthesis. The protein is Delta(14)-sterol reductase TM7SF2 (TM7SF2) of Homo sapiens (Human).